A 239-amino-acid polypeptide reads, in one-letter code: Ribosomal RNA small subunit methyltransferase G (239 aa).

S-adenosyl-L-methionine contacts are provided by residues Gly78, Phe83, 129-130 (AE), and Arg148.

It belongs to the methyltransferase superfamily. RNA methyltransferase RsmG family.

It localises to the cytoplasm. Its function is as follows. Specifically methylates the N7 position of a guanine in 16S rRNA. The chain is Ribosomal RNA small subunit methyltransferase G from Clostridium perfringens (strain SM101 / Type A).